Consider the following 761-residue polypeptide: Complement factor B (761 aa).

The N-terminal stretch at 1 to 22 is a signal peptide; the sequence is MESPQLCLVLLVLGFSSGGVSA. 3 Sushi domains span residues 32 to 97, 98 to 157, and 160 to 217; these read VSCS…ECRA, IRCP…ICDD, and GYCP…SCQD. Cystine bridges form between Cys-34/Cys-73, Cys-59/Cys-95, Cys-100/Cys-142, Cys-128/Cys-155, Cys-162/Cys-202, and Cys-188/Cys-215. N-linked (GlcNAc...) asparagine glycans are attached at residues Asn-119 and Asn-139. One can recognise a VWFA domain in the interval 267 to 466; the sequence is NIYLVLDGSD…DLENVFYQMI (200 aa). Mg(2+) is bound by residues Ser-275 and Ser-277. Asn-282 is a glycosylation site (N-linked (GlcNAc...) asparagine). Residue Thr-350 participates in Mg(2+) binding. N-linked (GlcNAc...) asparagine glycosylation is present at Asn-375. One can recognise a Peptidase S1 domain in the interval 474-754; the sequence is LCGMVWEHKK…VLPWLKDKLK (281 aa). Disulfide bonds link Cys-475–Cys-593, Cys-508–Cys-524, Cys-596–Cys-612, Cys-653–Cys-679, and Cys-692–Cys-722. Catalysis depends on charge relay system residues His-523 and Asp-573. The active-site Charge relay system is the Ser-696.

Belongs to the peptidase S1 family. As to quaternary structure, monomer. Interacts with complement C3b; this interaction is dependent on the presence of Mg(2+). In terms of assembly, catalytic component of the C3 convertase of the alternative complement pathway, also named C3bBb, composed of complement factor B Bb and complement C3b. Catalytic component of the C5 convertase of the alternative complement pathway, also named C3bBb3b, composed of complement factor B Bb and additional molecules of complement C3b. Interacts to CFP; this interaction contributes to the stabilization of the active C3-convertase enzyme complex. It depends on Mg(2+) as a cofactor. The cofactor is Mn(2+). Cleaved by CFD following activation of the alternative complement system, generating Ba and Bb chains. Cleavage and activation takes place when CFB is already associated with complement C3b.

The protein localises to the secreted. The protein resides in the cell surface. The catalysed reaction is Cleavage of Arg-|-Ser bond in complement component C3 alpha-chain to yield C3a and C3b, and Arg-|-Xaa bond in complement component C5 alpha-chain to yield C5a and C5b.. In terms of biological role, precursor of the catalytic component of the C3 and C5 convertase complexes of the alternative pathway of the complement system, a cascade of proteins that leads to phagocytosis and breakdown of pathogens and signaling that strengthens the adaptive immune system. The alternative complement pathway acts as an amplification loop that enhances other complement pathways (classical, lectin and GZMK) by promoting formation of additional C3 and C5 convertases. CFB is cleaved and activated by CFD to generate Ba and Bb chains; Bb chain constituting the catalytic component of the C3 and C5 convertases. Functionally, serine protease component of the complement C3 and C5 convertase complexes of the alternative complement pathway. Following cleavage and activation by factor D (CFD), forms the C3 convertase together with complement C3b. As part of the C3 convertase, cleaves and activates C3 into C3a anaphylatoxin and C3b opsonin, the next components of the complement pathways. When an additional complement C3b molecule binds to the C3 convertase, forms the C5 convertase, which cleaves and activates C5 into C5a anaphylatoxin and C5b component of the membrane attack complex. Involved in proliferation and differentiation of preactivated B-lymphocytes, rapid spreading of peripheral blood monocytes, stimulation of lymphocyte blastogenesis and lysis of erythrocytes. The sequence is that of Complement factor B (Cfb) from Mus musculus (Mouse).